We begin with the raw amino-acid sequence, 930 residues long: Isoleucine--tRNA ligase (930 aa).

A 'HIGH' region motif is present at residues 57–67 (PYANGNIHVGH). Glutamate 554 is a binding site for L-isoleucyl-5'-AMP. A 'KMSKS' region motif is present at residues 595–599 (KMSKS). Residue lysine 598 coordinates ATP. Zn(2+) is bound by residues cysteine 888, cysteine 891, cysteine 908, and cysteine 911.

This sequence belongs to the class-I aminoacyl-tRNA synthetase family. IleS type 1 subfamily. In terms of assembly, monomer. Zn(2+) serves as cofactor.

It is found in the cytoplasm. It catalyses the reaction tRNA(Ile) + L-isoleucine + ATP = L-isoleucyl-tRNA(Ile) + AMP + diphosphate. Functionally, catalyzes the attachment of isoleucine to tRNA(Ile). As IleRS can inadvertently accommodate and process structurally similar amino acids such as valine, to avoid such errors it has two additional distinct tRNA(Ile)-dependent editing activities. One activity is designated as 'pretransfer' editing and involves the hydrolysis of activated Val-AMP. The other activity is designated 'posttransfer' editing and involves deacylation of mischarged Val-tRNA(Ile). The chain is Isoleucine--tRNA ligase from Streptococcus pneumoniae (strain ATCC BAA-255 / R6).